The following is a 1207-amino-acid chain: MVDVNKFESMRIGIASPQKIRYWSFGEVKKPETINYRTQKPEREGLFDERIFGPQKDWECACGKLKGVFYKNQVCELCGVQVTTAKSRRERMGHIELAAPISHIWYFKGIPSRMGLALDMSPRALEEVIYFASYVVIDPKETDLEKKQLLTEREYREQLLKNGFGSFVAKMGAEAIQDLLNDVDIDKEVSELKEELKTVTGQRRVKIIRRLDVLSAFRKSGNALSWMVLNVLPVIPPDLRPMVQLDGGRFATSDLNDLYRRVINRNNRLKRLMELNAPNIIVQNEKRMLQEAVDTLIDNGRRGRPITGAGNRPLKSLSHMLKGKQGRFRQNLLGKRVDYSGRSVIAVGPTLKMYQCGVPREMAIELFKPFVMAQLVKKELAANIRAAKRKVERQDSDVWDVLETVVKEHPVLLNRAPTLHRLGIQAFEPVLIDGKAIRLHPLACEAYNADFDGDQMAIHLPLSEEAQAEARLLMLAAEHILNPKDGKPVVTPSQDMVLGNYYLTMEEKGREGEGMIFATPEEVEIAMRNGYVHLHTRIGIATKSLNKPWTENQKDKILVTTVGKVIFNSIIPEGMPYLNEPTDVNLTTSTDDRFFMDAGQDIKEVLAGIDTVRPFKKGYLGNIIAEVFKRYRTTATSEYLDRLKNLGYHQSTLAGLTVGIADIPVVEDKHKIIDAAHKRVEQITKQFRRGLITDDERYNAVTGVWRDAKEALEKRLIDEQDLTNPIVMMMDSGARGNISNFSQLAGMRGLMAAPNGKIMELPIISNFREGLSVLEMFFSTHGARKGMTDTALKTADSGYLTRRLVDVAQDVIIREDDCGTDRGLVISDIATGKEMVEPLFERLVGRYTRKSVLHPETGEMIIADDTLISEDVARKIIDAGVKEVTIRSVFTCKTPHGVCKHCYGINLATGDAVEVGEAVGTIAAQSIGEPGTQLTMRTFHTGGVASSSDITQGLPRVQEIFEARNPKGEAIITEVTGTVESIVEDPATRTREITVKGKTDTRSYTVGMADVLMVEEGEFIHRGAPLIQGSIEPKHLLQVRDALSVETYLLGEVQKTYRSQGVEIGDKHIEVMVRQMLRKVRVMDNGSTDILPGTLMDISDFEALNETALLNGEMPATGRPVLMGITKASLETNSFLSAASFQETTRVLTDAAIRGKEDHLLGLKENVIIGKIIPAGTGMFRYRNIEPLADLTNAPEVEEVETETVEN.

Residues cysteine 60, cysteine 62, cysteine 75, and cysteine 78 each coordinate Zn(2+). Residues aspartate 450, aspartate 452, and aspartate 454 each contribute to the Mg(2+) site. Positions 818, 892, 899, and 902 each coordinate Zn(2+).

Belongs to the RNA polymerase beta' chain family. As to quaternary structure, the RNAP catalytic core consists of 2 alpha, 1 beta, 1 beta' and 1 omega subunit. When a sigma factor is associated with the core the holoenzyme is formed, which can initiate transcription. Mg(2+) serves as cofactor. The cofactor is Zn(2+).

It catalyses the reaction RNA(n) + a ribonucleoside 5'-triphosphate = RNA(n+1) + diphosphate. DNA-dependent RNA polymerase catalyzes the transcription of DNA into RNA using the four ribonucleoside triphosphates as substrates. The chain is DNA-directed RNA polymerase subunit beta' from Lactococcus lactis subsp. lactis (strain IL1403) (Streptococcus lactis).